We begin with the raw amino-acid sequence, 123 residues long: Large ribosomal subunit protein eL8 (123 aa).

The protein belongs to the eukaryotic ribosomal protein eL8 family. In terms of assembly, part of the 50S ribosomal subunit. Probably part of the RNase P complex.

The protein resides in the cytoplasm. Its function is as follows. Multifunctional RNA-binding protein that recognizes the K-turn motif in ribosomal RNA, the RNA component of RNase P, box H/ACA, box C/D and box C'/D' sRNAs. The polypeptide is Large ribosomal subunit protein eL8 (Thermococcus gammatolerans (strain DSM 15229 / JCM 11827 / EJ3)).